The primary structure comprises 300 residues: N-acetylmuramic acid 6-phosphate etherase 1 (300 aa).

In terms of domain architecture, SIS spans 57–220 (IATAFAQGGR…TTGAMIKSGK (164 aa)). Catalysis depends on Glu85, which acts as the Proton donor. The active site involves Glu116.

This sequence belongs to the GCKR-like family. MurNAc-6-P etherase subfamily. Homodimer.

It carries out the reaction N-acetyl-D-muramate 6-phosphate + H2O = N-acetyl-D-glucosamine 6-phosphate + (R)-lactate. It participates in amino-sugar metabolism; 1,6-anhydro-N-acetylmuramate degradation. It functions in the pathway amino-sugar metabolism; N-acetylmuramate degradation. The protein operates within cell wall biogenesis; peptidoglycan recycling. In terms of biological role, specifically catalyzes the cleavage of the D-lactyl ether substituent of MurNAc 6-phosphate, producing GlcNAc 6-phosphate and D-lactate. Together with AnmK, is also required for the utilization of anhydro-N-acetylmuramic acid (anhMurNAc) either imported from the medium or derived from its own cell wall murein, and thus plays a role in cell wall recycling. The sequence is that of N-acetylmuramic acid 6-phosphate etherase 1 from Vibrio cholerae serotype O1 (strain ATCC 39315 / El Tor Inaba N16961).